Reading from the N-terminus, the 568-residue chain is MTLRLSRRAYAEMFGPTTGDRVRLADTELLIEIERDYTIYGEEVKFGGGKVIRDGMGQSQRVAADVPDTIITNAVILDHWGIVKADIAIKHGRIAAIGKAGNPDIQPGVTIAIGAATEVIAGEGLIVTAGGIDTHIHFISPQQIDEALASGVTTMLGGGTGPATGTNATTCTPGPWHMERMLQAADGWPINLGFLGKGNASLPQPLVEQIAAGAIGLKLHEDWGTTPAAIDNCLSVADDTDTQVAIHTDTLNEAGFVESTVAAFKGRTIHTYHTEGAGGGHAPDILKVCGEANVLPSSTNPTRPYTINTLDEHLDMLMVCHHLDPSIAEDLAFAESRIRRETIAAEDILHDLGALSMLSSDSQAMGRVGEVIIRTWQTAHKMKVQRGALPEDGARNDNFRAKRYVAKYTINPAITHGIAHEVGSIEPGKWADLVLWEPAFFGIKPSMILKGGMIAVAQMGDPNASIPTPQPVHYREMFATRGGALARTSLTFVSQMAADAGIAERYGLAKRIVPVRNCRNVTKADMIHNAWRPSISVDPETYDVIADGQLLTCEPASVLPMAQRYFLF.

Positions 130 to 568 (GGIDTHIHFI…LPMAQRYFLF (439 aa)) constitute a Urease domain. 3 residues coordinate Ni(2+): H135, H137, and K218. K218 carries the post-translational modification N6-carboxylysine. H220 lines the substrate pocket. Positions 247 and 273 each coordinate Ni(2+). The active-site Proton donor is H321. Residue D361 coordinates Ni(2+).

This sequence belongs to the metallo-dependent hydrolases superfamily. Urease alpha subunit family. In terms of assembly, heterotrimer of UreA (gamma), UreB (beta) and UreC (alpha) subunits. Three heterotrimers associate to form the active enzyme. Requires Ni cation as cofactor. In terms of processing, carboxylation allows a single lysine to coordinate two nickel ions.

It localises to the cytoplasm. It carries out the reaction urea + 2 H2O + H(+) = hydrogencarbonate + 2 NH4(+). It participates in nitrogen metabolism; urea degradation; CO(2) and NH(3) from urea (urease route): step 1/1. The protein is Urease subunit alpha of Burkholderia ambifaria (strain ATCC BAA-244 / DSM 16087 / CCUG 44356 / LMG 19182 / AMMD) (Burkholderia cepacia (strain AMMD)).